We begin with the raw amino-acid sequence, 730 residues long: Dynein axonemal intermediate chain 7 (730 aa).

Residues Met1–Met14 are compositionally biased toward basic residues. The disordered stretch occupies residues Met1 to Leu20.

The protein belongs to the DNAI7 family. As to quaternary structure, part of the multisubunit axonemal dynein complex formed at least of two heavy chains and a number of intermediate and light chains. Interacts with tubulin. Associates with microtubule. In terms of processing, ubiquitinated. Ubiquitination leads to its degradation through the 26S proteasome. Ubiquitin-proteasome-mediated DNAI7 degradation occurs in mitosis. As to expression, high expressed in lung, kidney, and testis.

The protein localises to the cell projection. Its subcellular location is the cilium. The protein resides in the cytoplasm. In terms of biological role, via its association with the multisubunit axonemal dynein complex, is potentially involved in the regulation of cilia function. May also act as a cell cycle regulator. In Mus musculus (Mouse), this protein is Dynein axonemal intermediate chain 7 (Dnai7).